Reading from the N-terminus, the 179-residue chain is MFVSLSEKKKFLTWLVNTAPFGRREVLWILNYLLTHDAILNNVHFVENVEKTDRGIRVVADGLGKEPLLLFIQAQEFTDPEQIFHEIRMNWRKALYLECVFPEAWQTSQYLSVLEDNPFAPWNEQVDQEVARAIDQYFKQEEQTQRMALLKAQIDDALETGNKEAFLELSDELNRLKQQ.

Belongs to the UPF0302 family.

The protein is UPF0302 protein EF_1554 of Enterococcus faecalis (strain ATCC 700802 / V583).